A 145-amino-acid chain; its full sequence is Basic phospholipase A2 textilotoxin A chain (145 aa).

The signal sequence occupies residues 1-19 (MHPAHLLVLLGVCVSLLGA). A propeptide spanning residues 20-27 (SDIPPLPL) is cleaved from the precursor. Intrachain disulfides connect cysteine 38/cysteine 98, cysteine 54/cysteine 144, cysteine 56/cysteine 72, cysteine 71/cysteine 125, cysteine 78/cysteine 118, cysteine 87/cysteine 111, and cysteine 105/cysteine 116. The Ca(2+) site is built by tyrosine 55, glycine 57, and glycine 59. Histidine 75 is a catalytic residue. Position 76 (aspartate 76) interacts with Ca(2+). The active site involves aspartate 119.

Belongs to the phospholipase A2 family. Group I subfamily. D49 sub-subfamily. Heterohexamer. 2 forms exist: 2 A or 2 B chains, 2 C chains and 2 covalently-linked D chains, and 1 A or 1 B, 1 C, 2 covalently-linked D chains and 2 differentially glycosylated covalently-linked D chains. Textilotoxin was originally described as pentameric. Ca(2+) serves as cofactor. As to expression, expressed by the venom gland.

The protein resides in the secreted. The catalysed reaction is a 1,2-diacyl-sn-glycero-3-phosphocholine + H2O = a 1-acyl-sn-glycero-3-phosphocholine + a fatty acid + H(+). In terms of biological role, snake venom oligomeric phospholipase A2 that has potent presynaptic neurotoxicity. Chain A possesses a very low toxicity, but is essential for neurotoxicity. Possesses a low enzymatic activity. PLA2 catalyzes the calcium-dependent hydrolysis of the 2-acyl groups in 3-sn-phosphoglycerides. The protein is Basic phospholipase A2 textilotoxin A chain of Pseudonaja textilis (Eastern brown snake).